The chain runs to 658 residues: Deoxynucleoside triphosphate triphosphohydrolase SAMHD1 (658 aa).

Positions 23–68 are disordered; sequence SQPRVSEVAMQSAPLEQPAKRPRCDGSPRTPPSTPPATANLSADDD. Residue serine 49 is modified to Phosphoserine. Residue threonine 52 is modified to Phosphothreonine. Serine 55 is modified (phosphoserine). Phosphothreonine is present on threonine 56. A phosphoserine mark is found at serine 64 and serine 125. The region spanning 77–142 is the SAM domain; it reads WEPEDVCSFL…IECIQQLSQS (66 aa). GTP-binding residues include lysine 148 and valine 149. Asparagine 151 contributes to the dGTP binding site. GTP-binding residues include aspartate 169, glutamine 174, and arginine 177. DGTP contacts are provided by leucine 182 and valine 188. The region spanning 196 to 348 is the HD domain; that stretch reads RFEHSLGVGY…GIDVDKWDYF (153 aa). Positions 199, 238, and 239 each coordinate Mn(2+). DGTP is bound by residues aspartate 239, histidine 247, histidine 265, and glutamate 266. Histidine 265 is a catalytic residue. Aspartate 343 lines the Mn(2+) pocket. Residues tyrosine 347, aspartate 351, arginine 365, arginine 395, lysine 397, asparagine 401, tyrosine 417, histidine 419, and lysine 420 each coordinate dGTP. Residues arginine 494 and lysine 498 each contribute to the GTP site. Residue lysine 509 forms a Glycyl lysine isopeptide (Lys-Gly) (interchain with G-Cter in SUMO2) linkage. Residue lysine 565 coordinates GTP. Lysine 565 contributes to the dGTP binding site. Phosphothreonine is present on threonine 634. Threonine 634 is modified ((Microbial infection) Phosphothreonine).

Belongs to the SAMHD1 family. Homodimer; in absence of GTP and dNTP. Homotetramer; in GTP- and dNTP-bound form. Interacts with MRE11; leading to stimulate the exonuclease activity of MRE11. Interacts with RBBP8/CtIP. Interacts with RBBP8/CtIP. Interacts (via its C-terminus) with CD81. Requires Zn(2+) as cofactor. Phosphorylation at Thr-634 by CDK1 acts as a switch to control deoxynucleoside triphosphate (dNTPase)-dependent and -independent functions. Phosphorylation at Thr-634 takes place in cycling cells: it reduces the stability of the homotetramer, impairing the dNTPase activity and subsequent ability to restrict infection by viruses. It also inhibits ability to suppress LINE-1 retrotransposon activity. In contrast, phosphorylation at Thr-634 promotes DNA end resection at stalled replication forks in response to DNA damage. In terms of processing, (Microbial infection) Phosphorylation at Thr-634 by mouse cytomegalovirus kinase M97 leads to a reduced level of dNTP hydrolase activity and the loss of viral restriction. Post-translationally, not phosphorylated by CDK1 at the C-terminus.

It localises to the nucleus. The protein localises to the chromosome. It carries out the reaction a 2'-deoxyribonucleoside 5'-triphosphate + H2O = a 2'-deoxyribonucleoside + triphosphate + H(+). The enzyme catalyses dATP + H2O = 2'-deoxyadenosine + triphosphate + H(+). The catalysed reaction is dCTP + H2O = 2'-deoxycytidine + triphosphate + H(+). It catalyses the reaction dGTP + H2O = 2'-deoxyguanosine + triphosphate + H(+). It carries out the reaction dTTP + H2O = thymidine + triphosphate + H(+). Its activity is regulated as follows. Allosterically activated and regulated via the combined actions of GTP and dNTPs (dATP, dGTP, dTTP and dCTP): Allosteric site 1 binds GTP, while allosteric site 2 binds dNTP. Allosteric activation promotes the formation of highly active homotetramers. Isoform 1: Phosphorylation at Thr-634 impairs homotetramerization, thereby inhibiting dNTPase activity, leading to reduced ability to restrict infection by viruses. Functionally, protein that acts both as a host restriction factor involved in defense response to virus and as a regulator of DNA end resection at stalled replication forks. Has deoxynucleoside triphosphate (dNTPase) activity, which is required to restrict infection by viruses: dNTPase activity reduces cellular dNTP levels to levels too low for retroviral reverse transcription to occur, blocking early-stage virus replication in dendritic and other myeloid cells. Likewise, suppresses LINE-1 retrotransposon activity. In addition to virus restriction, dNTPase activity acts as a regulator of DNA precursor pools by regulating dNTP pools. Phosphorylation at Thr-634 acts as a switch to control dNTPase-dependent and -independent functions: it inhibits dNTPase activity and ability to restrict infection by viruses, while it promotes DNA end resection at stalled replication forks. Functions during S phase at stalled DNA replication forks to promote the resection of gapped or reversed forks: acts by stimulating the exonuclease activity of MRE11, activating the ATR-CHK1 pathway and allowing the forks to restart replication. Its ability to promote degradation of nascent DNA at stalled replication forks is required to prevent induction of type I interferons, thereby preventing chronic inflammation. Ability to promote DNA end resection at stalled replication forks is independent of dNTPase activity. Enhances immunoglobulin hypermutation in B-lymphocytes by promoting transversion mutation. This Mus musculus (Mouse) protein is Deoxynucleoside triphosphate triphosphohydrolase SAMHD1.